A 281-amino-acid chain; its full sequence is Ribose-phosphate pyrophosphokinase (281 aa).

ATP-binding positions include 33–35 (DGE) and 90–91 (RQ). 2 residues coordinate Mg(2+): H123 and D161. Residue K185 is part of the active site. R187 and D211 together coordinate D-ribose 5-phosphate.

This sequence belongs to the ribose-phosphate pyrophosphokinase family. Class III (archaeal) subfamily. Mg(2+) serves as cofactor.

Its subcellular location is the cytoplasm. It catalyses the reaction D-ribose 5-phosphate + ATP = 5-phospho-alpha-D-ribose 1-diphosphate + AMP + H(+). It functions in the pathway metabolic intermediate biosynthesis; 5-phospho-alpha-D-ribose 1-diphosphate biosynthesis; 5-phospho-alpha-D-ribose 1-diphosphate from D-ribose 5-phosphate (route I): step 1/1. Its function is as follows. Involved in the biosynthesis of the central metabolite phospho-alpha-D-ribosyl-1-pyrophosphate (PRPP) via the transfer of pyrophosphoryl group from ATP to 1-hydroxyl of ribose-5-phosphate (Rib-5-P). The protein is Ribose-phosphate pyrophosphokinase of Halobacterium salinarum (strain ATCC 29341 / DSM 671 / R1).